A 346-amino-acid chain; its full sequence is Oxidoreductase calI (346 aa).

The disordered stretch occupies residues 11–33; that stretch reads VSTPQGRGDGRPTADQVLRDQDP. Residues 18–32 are compositionally biased toward basic and acidic residues; that stretch reads GDGRPTADQVLRDQD. Leu52, Lys76, Asp100, and Asn128 together coordinate NADP(+). Catalysis depends on Ser181, which acts as the Proton donor. Positions 208, 212, and 241 each coordinate NADP(+). The active-site Proton acceptor is Tyr208. Lys212 (lowers pKa of active site Tyr) is an active-site residue.

It belongs to the short-chain dehydrogenases/reductases (SDR) family.

It participates in secondary metabolite biosynthesis. Its function is as follows. Oxidoreductase; part of the gene cluster that mediates the biosynthesis of calbistrin A and related compounds. Calbistrin A is a secondary metabolite with an interesting structure that was recently found to have bioactivity against leukemia cells. It consists of two polyketides linked by an ester bond: a bicyclic decalin containing polyketide and a linear 12 carbon dioic acid structure. The polyketide synthase calA is probably responsible for forming the decalin moiety. Because calA lacks a designated enoylreductase (ER) domain, the required activity is provided by the trans-enoyl reductase calK. Following release from the PKS, calF then probably catalyzes the oxidation and the subsequent Diels Alder cycloisomerization that lead to the formation of the decalin moiety. The decalin polyketide backbone includes two C-methyl groups, at C7 and C11 in backbone, of which the C7 position is probably methylated by the methyltransferase domain of calA. A candidate for adding the methyl group at C11, if not done by CalA, is the cluster methyltransferase calH. Several additional tailoring enzymes within the cluster could be involved in the modification of the decalin polyketide product. Those include the 3 cytochrome P450 monooxygenases CalE, CalG and CalL, of which one might be responsible for the introduction of the extra hydroxyl group attached to the backbone of the decalin moiety, at position C9 in the backbone, that allows for attachment of the linear moiety. One tailoring enzyme activity that is expected to be involved in biosynthesis of calbistrin is an acyltransferase for connecting the two polyketide synthase products, and which could be performed by the cluster acyltransferase calJ. The enzyme responsible for the biosynthesis of the linear moiety, probably a second PKS, has not been identified yet. The sequence is that of Oxidoreductase calI from Penicillium decumbens.